Here is a 170-residue protein sequence, read N- to C-terminus: Photosystem I assembly protein Ycf3 (170 aa).

TPR repeat units follow at residues 35-68 (AFTY…EIDP), 72-105 (SYIL…NPFL), and 120-153 (GEQA…TPGN).

The protein belongs to the Ycf3 family.

It is found in the plastid. Its subcellular location is the chloroplast thylakoid membrane. Functionally, essential for the assembly of the photosystem I (PSI) complex. May act as a chaperone-like factor to guide the assembly of the PSI subunits. This chain is Photosystem I assembly protein Ycf3, found in Saccharum officinarum (Sugarcane).